We begin with the raw amino-acid sequence, 188 residues long: UPF0301 protein Tcr_1827 (188 aa).

This sequence belongs to the UPF0301 (AlgH) family.

The polypeptide is UPF0301 protein Tcr_1827 (Hydrogenovibrio crunogenus (strain DSM 25203 / XCL-2) (Thiomicrospira crunogena)).